Here is a 61-residue protein sequence, read N- to C-terminus: Ferredoxin (61 aa).

The region spanning 2-28 (LYITEECTYCGACEPECPTNAISAGSE) is the 4Fe-4S ferredoxin-type domain. Positions 8, 11, 14, 18, 37, 40, 49, and 53 each coordinate [4Fe-4S] cluster.

It depends on [4Fe-4S] cluster as a cofactor.

Its function is as follows. Ferredoxins are iron-sulfur proteins that transfer electrons in a wide variety of metabolic reactions. The chain is Ferredoxin from Chlorobaculum thiosulfatiphilum (Chlorobium limicola f.sp. thiosulfatophilum).